The sequence spans 293 residues: Homoserine kinase (293 aa).

84-94 provides a ligand contact to ATP; sequence PFSRGLGSSSS.

This sequence belongs to the GHMP kinase family. Homoserine kinase subfamily.

It localises to the cytoplasm. It catalyses the reaction L-homoserine + ATP = O-phospho-L-homoserine + ADP + H(+). Its pathway is amino-acid biosynthesis; L-threonine biosynthesis; L-threonine from L-aspartate: step 4/5. In terms of biological role, catalyzes the ATP-dependent phosphorylation of L-homoserine to L-homoserine phosphate. The sequence is that of Homoserine kinase from Campylobacter fetus subsp. fetus (strain 82-40).